Here is a 76-residue protein sequence, read N- to C-terminus: Small ribosomal subunit protein uS17 (76 aa).

The protein belongs to the universal ribosomal protein uS17 family. Part of the 30S ribosomal subunit.

Its function is as follows. One of the primary rRNA binding proteins, it binds specifically to the 5'-end of 16S ribosomal RNA. The polypeptide is Small ribosomal subunit protein uS17 (Anaplasma phagocytophilum (strain HZ)).